Consider the following 391-residue polypeptide: Pyruvate dehydrogenase E1 component subunit beta-3, chloroplastic (391 aa).

The N-terminal 35 residues, 1 to 35, are a transit peptide targeting the chloroplast; the sequence is MATAAAASLQYALHGAASASAKPRSAAPGRSVRVV. Thiamine diphosphate is bound at residue E127. K(+)-binding residues include I180, A228, I229, and N233.

Tetramer of 2 alpha and 2 beta subunits. Requires thiamine diphosphate as cofactor.

It localises to the plastid. It is found in the chloroplast. The enzyme catalyses N(6)-[(R)-lipoyl]-L-lysyl-[protein] + pyruvate + H(+) = N(6)-[(R)-S(8)-acetyldihydrolipoyl]-L-lysyl-[protein] + CO2. Functionally, the pyruvate dehydrogenase complex catalyzes the overall conversion of pyruvate to acetyl-CoA and CO(2). It contains multiple copies of three enzymatic components: pyruvate dehydrogenase (E1), dihydrolipoamide acetyltransferase (E2) and lipoamide dehydrogenase (E3). The polypeptide is Pyruvate dehydrogenase E1 component subunit beta-3, chloroplastic (Oryza sativa subsp. japonica (Rice)).